A 537-amino-acid polypeptide reads, in one-letter code: MKLLAVRRLLRIQRVVIRYRLDDLLFEQPLLPWWLASLRLLMPWRWLPRKPLALSRGARLRLALQDLGPIFIKFGQLLSTRRDLLPTDIADELMLLQDRVPPFDPQHAVALIEEQLGAKVGEVFSRFDVEPLASASVAQVHAARLKSGEEVVVKVVRPGLKPVIAQDLAWLFLIAKAAERASADARRLHPVEIVGDYEKTIYDELDLLREAANASQLRRNFEGSELMYVPQVYWDLCRPKVLVMERIYGVPVTDMATLADQRTDMKMLAERGVEVFFTQVFRDSFFHADMHPGNIFVSTVKPWSPQYIAIDCGIVGSLTAEDQDYLARNLIAFFKRDYRRVAQLHIDSGWVPAQTKVNEFEAAIRTVCEPIFEKPLKDISFGQVLMRLFQTARRFNMEVQPQLVLLQKTLLNIEGLGRQLYPDLDLWSTAKPFLERWMRERMSPKAVIGNLYNQAEQLPHLADMTRDLLERLSQPHLNDAQLPERRRQGDNWALRLLGAGLLGGGATLAAGAVSLSAPAAWPAWLMLAAGLYLIVRR.

A helical membrane pass occupies residues 24–44 (LLFEQPLLPWWLASLRLLMPW). The region spanning 126–494 (RFDVEPLASA…RRRQGDNWAL (369 aa)) is the Protein kinase domain. ATP-binding positions include 132–140 (LASASVAQV) and Lys-154. Catalysis depends on Asp-289, which acts as the Proton acceptor. The next 2 helical transmembrane spans lie at 493–513 (ALRLLGAGLLGGGATLAAGAV) and 515–535 (LSAPAAWPAWLMLAAGLYLIV).

The protein belongs to the ABC1 family. UbiB subfamily.

It is found in the cell inner membrane. It functions in the pathway cofactor biosynthesis; ubiquinone biosynthesis [regulation]. Is probably a protein kinase regulator of UbiI activity which is involved in aerobic coenzyme Q (ubiquinone) biosynthesis. The sequence is that of Probable protein kinase UbiB from Pseudomonas entomophila (strain L48).